The primary structure comprises 444 residues: NADH-dependent flavin oxidoreductase nadA (444 aa).

Residues 37–40 and glutamine 123 contribute to the FMN site; that span reads ERMC. Residues 127–149 are disordered; that stretch reads PGRQTPSHRQPEPISASDVPLDT. 192–195 provides a ligand contact to substrate; it reads HAAH. Position 345–346 (345–346) interacts with FMN; the sequence is AR.

Belongs to the NADH:flavin oxidoreductase/NADH oxidase family.

It is found in the cytoplasm. The protein resides in the cytosol. In terms of biological role, NADH-dependent flavin oxidoreductase; part of the gene cluster that mediates the biosynthesis of aflatoxins, a group of polyketide-derived furanocoumarins, and part of the most toxic and carcinogenic compounds among the known mycotoxins. The four major aflatoxins produced by A.parasiticus are aflatoxin B1 (AFB1), aflatoxin B2 (AFB2), aflatoxin G1 (AFG1) and aflatoxin G2 (AFG2). Within the aflatoxin pathway, the NADH-dependent flavin oxidoreductase nadA is specifically required for the last steps in which OMST is converted specifically to aflatoxin G1. The biosynthesis of aflatoxins begins with the norsolorinic acid synthase aflC that combines a hexanoyl starter unit produced by the fatty acid synthase aflA/aflB and 7 malonyl-CoA extender units to synthesize the precursor NOR. The second step is the conversion of NOR to averantin and requires the norsolorinic acid ketoreductase aflD, which catalyzes the dehydration of norsolorinic acid to form (1'S)-averantin. The norsolorinic acid reductases aflE and aflF may also play a role in the conversion of NOR to AVN. The cytochrome P450 monooxygenase aflG then catalyzes the hydroxylation of AVN to 5'hydroxyaverantin (HAVN). The next step is performed by the 5'-hydroxyaverantin dehydrogenase aflH that transforms HAVN to 5'-oxoaverantin (OAVN) which is further converted to averufin (AVF) by aflK that plays a dual role in the pathway, as a 5'-oxoaverantin cyclase that mediates conversion of 5'-oxoaverantin, as well as a versicolorin B synthase in a later step in the pathway. The averufin oxidase aflI catalyzes the conversion of AVF to versiconal hemiacetal acetate (VHA). VHA is then the substrate for the versiconal hemiacetal acetate esterase aflJ to yield versiconal (VAL). Versicolorin B synthase aflK then converts VAL to versicolorin B (VERB) by closing the bisfuran ring of aflatoxin which is required for DNA-binding, thus giving to aflatoxin its activity as a mutagen. Then, the activity of the versicolorin B desaturase aflL leads to versicolorin A (VERA). A branch point starts from VERB since it can also be converted to dihydrodemethylsterigmatocystin (DMDHST), probably also by aflL, VERA being a precursor for aflatoxins B1 and G1, and DMDHST for aflatoxins B2 and G2. Next, the versicolorin reductase aflM and the cytochrome P450 monooxygenase aflN are involved in conversion of VERA to demethylsterigmatocystin (DMST). AflX and aflY seem also involved in this step, through probable aflX-mediated epoxide ring-opening step following versicolorin A oxidation and aflY-mediated Baeyer-Villiger oxidation required for the formation of the xanthone ring. The methyltransferase aflO then leads to the modification of DMST to sterigmatocystin (ST), and of DMDHST to dihydrosterigmatocystin (DHST). Both ST and DHST are then substrates of the O-methyltransferase aflP to yield O-methylsterigmatocystin (OMST) and dihydro-O-methylsterigmatocystin (DHOMST), respectively. Finally OMST is converted to aflatoxins B1 and G1, and DHOMST to aflatoxins B2 and G2, via the action of several enzymes including O-methylsterigmatocystin oxidoreductase aflQ, the cytochrome P450 monooxygenase aflU, but also the NADH-dependent flavin oxidoreductase nadA which is specifically required for the synthesis of AFG1. The polypeptide is NADH-dependent flavin oxidoreductase nadA (Aspergillus parasiticus (strain ATCC 56775 / NRRL 5862 / SRRC 143 / SU-1)).